The following is a 121-amino-acid chain: Putative inactive aspartokinase 3 HI_1632 (121 aa).

This sequence belongs to the aspartokinase family.

The chain is Putative inactive aspartokinase 3 HI_1632 from Haemophilus influenzae (strain ATCC 51907 / DSM 11121 / KW20 / Rd).